The following is a 530-amino-acid chain: Type 2 DNA topoisomerase 6 subunit B (530 aa).

ATP is bound by residues N42, D76, 97-98 (SK), 106-113 (GMYGLGVK), and K427.

It belongs to the TOP6B family. In terms of assembly, homodimer. Heterotetramer of two Top6A and two Top6B chains.

It catalyses the reaction ATP-dependent breakage, passage and rejoining of double-stranded DNA.. Relaxes both positive and negative superturns and exhibits a strong decatenase activity. The chain is Type 2 DNA topoisomerase 6 subunit B from Saccharolobus islandicus (strain M.16.4 / Kamchatka #3) (Sulfolobus islandicus).